A 171-amino-acid polypeptide reads, in one-letter code: PBAN-type neuropeptides (171 aa).

Positions 1–22 are cleaved as a signal peptide; the sequence is MFRLYFFFNVICIFLAIRSAIG. The propeptide occupies 23–47; it reads GEVPDATEQKINNFLASGKDSEDLS. L59 carries the post-translational modification Leucine amide. A propeptide spanning residues 63-111 is cleaved from the precursor; the sequence is TIASELHDEMMDEIDDNPLYYSGESPQRVASEIAQGTPYVVLLLTGRVL. The tract at residues 120 to 151 is disordered; the sequence is HSTTPRLGRRDASSSNENNSRPPFAPRLGRNL. 3 positions are modified to leucine amide: L126, L147, and L157. The propeptide occupies 160 to 171; sequence SFGAPVVDNFAY.

Belongs to the pyrokinin family.

It is found in the secreted. Its function is as follows. A hormone that controls sex pheromone production in females and pheromone responsiveness in male. Also mediates visceral muscle contractile activity (myotropic activity). This chain is PBAN-type neuropeptides, found in Aedes aegypti (Yellowfever mosquito).